The primary structure comprises 642 residues: Threonine--tRNA ligase (642 aa).

A TGS domain is found at Met1–Thr61. A catalytic region spans residues Asp243–Pro534. Cys334, His385, and His511 together coordinate Zn(2+).

The protein belongs to the class-II aminoacyl-tRNA synthetase family. In terms of assembly, homodimer. Zn(2+) is required as a cofactor.

Its subcellular location is the cytoplasm. The enzyme catalyses tRNA(Thr) + L-threonine + ATP = L-threonyl-tRNA(Thr) + AMP + diphosphate + H(+). In terms of biological role, catalyzes the attachment of threonine to tRNA(Thr) in a two-step reaction: L-threonine is first activated by ATP to form Thr-AMP and then transferred to the acceptor end of tRNA(Thr). Also edits incorrectly charged L-seryl-tRNA(Thr). In Salmonella paratyphi C (strain RKS4594), this protein is Threonine--tRNA ligase.